We begin with the raw amino-acid sequence, 216 residues long: Inner membrane assembly complex subunit 22 (216 aa).

The transit peptide at 1–26 directs the protein to the mitochondrion; the sequence is MFMARQVLRNGLFLRSLAPIKITART. At 27–43 the chain is on the mitochondrial matrix side; it reads VASANAGIKRKSRFDKT. The chain crosses the membrane as a helical span at residues 44–63; the sequence is MIKPLLLVMIFGSILNAVIA. Residues 64–93 adopt a coiled-coil conformation; that stretch reads EKRNIIDMERKYKLKLDKLKELIRRVHDNN. Over 64–216 the chain is Mitochondrial intermembrane; sequence EKRNIIDMER…KEHDKIPKFL (153 aa).

In terms of assembly, component of the inner membrane assembly (INA) complex, composed of INA17 and INA22. Interacts with a subset of F(1)F(0)-ATP synthase subunits of the F(1)-domain and the peripheral stalk.

Its subcellular location is the mitochondrion inner membrane. Functionally, component of the INA complex (INAC) that promotes the biogenesis of mitochondrial F(1)F(0)-ATP synthase. INAC facilitates the assembly of the peripheral stalk and promotes the assembly of the catalytic F(1)-domain with the membrane-embedded F(0)-domain. The polypeptide is Inner membrane assembly complex subunit 22 (Saccharomyces cerevisiae (strain ATCC 204508 / S288c) (Baker's yeast)).